Here is a 207-residue protein sequence, read N- to C-terminus: Large ribosomal subunit protein uL4 (207 aa).

Positions R45–V57 are enriched in polar residues. Residues R45–S77 form a disordered region.

It belongs to the universal ribosomal protein uL4 family. Part of the 50S ribosomal subunit.

Its function is as follows. One of the primary rRNA binding proteins, this protein initially binds near the 5'-end of the 23S rRNA. It is important during the early stages of 50S assembly. It makes multiple contacts with different domains of the 23S rRNA in the assembled 50S subunit and ribosome. Functionally, forms part of the polypeptide exit tunnel. This Oenococcus oeni (strain ATCC BAA-331 / PSU-1) protein is Large ribosomal subunit protein uL4.